The chain runs to 228 residues: 7-cyano-7-deazaguanine synthase (228 aa).

Position 9-19 (9-19 (LSGGPDSTTVL)) interacts with ATP. 4 residues coordinate Zn(2+): C193, C203, C206, and C209.

Belongs to the QueC family. Requires Zn(2+) as cofactor.

The enzyme catalyses 7-carboxy-7-deazaguanine + NH4(+) + ATP = 7-cyano-7-deazaguanine + ADP + phosphate + H2O + H(+). It functions in the pathway purine metabolism; 7-cyano-7-deazaguanine biosynthesis. Its function is as follows. Catalyzes the ATP-dependent conversion of 7-carboxy-7-deazaguanine (CDG) to 7-cyano-7-deazaguanine (preQ(0)). This is 7-cyano-7-deazaguanine synthase from Rickettsia rickettsii (strain Iowa).